Reading from the N-terminus, the 454-residue chain is Zeatin O-xylosyltransferase (454 aa).

Belongs to the UDP-glycosyltransferase family. As to expression, high level in young seeds, less in older seeds and very low in roots.

It catalyses the reaction zeatin + UDP-alpha-D-xylose = O-beta-D-xylosylzeatin + UDP + H(+). Utilizes UDP-xylose as the sugar donor and catalyzes the formation of o-xylosylzeatin from zeatin. Does not act on UDP-glucose. This chain is Zeatin O-xylosyltransferase, found in Phaseolus vulgaris (Kidney bean).